Consider the following 35-residue polypeptide: Phospholipase A2 neuwieditoxin-1 (35 aa).

Residues tyrosine 27, glycine 29, and glycine 31 each coordinate Ca(2+).

It belongs to the phospholipase A2 family. Group II subfamily. D49 sub-subfamily. In terms of assembly, dimer. The cofactor is Ca(2+). In terms of tissue distribution, expressed by the venom gland.

It localises to the secreted. It carries out the reaction a 1,2-diacyl-sn-glycero-3-phosphocholine + H2O = a 1-acyl-sn-glycero-3-phosphocholine + a fatty acid + H(+). Its function is as follows. Snake venom phospholipase A2 (PLA2) that shows presynaptic neurotoxicity. 10 ug/ml of this protein produce complete neuromuscular blockade up to 80 minutes, without inhibiting the responses to acetylcholine (ACh) and potassium chloride (KCl). In addition, it produces a calcium-dependent blockade of acetylcholine release and causes appearance of giant miniature end-plate potentials. PLA2 catalyzes the calcium-dependent hydrolysis of the 2-acyl groups in 3-sn-phosphoglycerides. The chain is Phospholipase A2 neuwieditoxin-1 from Bothrops pauloensis (Neuwied's lancehead).